The primary structure comprises 1138 residues: uncharacterized protein (1138 aa).

An N-terminal signal peptide occupies residues 1–28; that stretch reads MKLFPRSILIILVLSFALNLGLVTKTHA. 7 helical membrane passes run 331-351, 359-379, 392-412, 494-514, 520-540, 554-574, and 699-719; these read IVTA…LLAG, YINF…INIT, MIQW…SWVM, MLVS…AFMV, CMIS…MFLF, MISF…MFSV, and IKNI…MYNF. Residues 775–784 show a composition bias toward gly residues; that stretch reads DLKAGQGGGV. Disordered stretches follow at residues 775-914, 958-977, and 995-1071; these read DLKA…KGTG, GGGR…RTNA, and ERDN…KQIR. Residues 801 to 830 show a composition bias toward low complexity; that stretch reads AASGGTSAPTVTTPTASSSVATSSPKTVSS. A compositionally biased stretch (pro residues) spans 838 to 852; sequence TPPPAPSEAVSPPPA. Over residues 854–869 the composition is skewed to polar residues; the sequence is IRTSISTPAPQSNIET. 4 stretches are compositionally biased toward basic and acidic residues: residues 875 to 888, 961 to 977, 995 to 1032, and 1058 to 1071; these read IIRD…KEID, RIRD…RTNA, ERDN…RKEN, and LKEH…KQIR.

Belongs to the TrbL/VirB6 family.

The protein localises to the cell membrane. This is an uncharacterized protein from Rickettsia felis (strain ATCC VR-1525 / URRWXCal2) (Rickettsia azadi).